A 97-amino-acid polypeptide reads, in one-letter code: YcgL domain-containing protein PSEEN4034 (97 aa).

The 85-residue stretch at 3–87 (RICSIYKSPR…PDDDYIEHLP (85 aa)) folds into the YcgL domain.

This is YcgL domain-containing protein PSEEN4034 from Pseudomonas entomophila (strain L48).